We begin with the raw amino-acid sequence, 441 residues long: Bacteria-responsive protein 1 (441 aa).

The N-terminal stretch at 1-18 is a signal peptide; sequence MWFFKVGALLFLAALVSA. A glycan (N-linked (GlcNAc...) asparagine) is linked at Asn20. The region spanning 25–441 is the GH18 domain; that stretch reads PKVLCYYDGQ…PILRAAKYRL (417 aa). An intrachain disulfide couples Cys29 to Cys56. Asn225 carries N-linked (GlcNAc...) asparagine glycosylation.

This sequence belongs to the glycosyl hydrolase 18 family. IDGF subfamily. As to expression, salivary gland (at protein level).

Its subcellular location is the secreted. Its function is as follows. Promotes recruitment of host neutrophils at the bite site. Induces expression of IL1B and IL6 in the skin of the host. In terms of biological role, (Microbial infection) Enhances Zika virus replication and exacerbates disease pathogenesis in the host. This Aedes aegypti (Yellowfever mosquito) protein is Bacteria-responsive protein 1.